The following is a 371-amino-acid chain: MSDNSQKKVIVGMSGGVDSSVSAYLLQQQGYQVAGLFMKNWEEDDDEEYCSAATDLADAQAVCDKLGMELHTVNFAAEYWDNVFELFLAEYKAGRTPNPDILCNKEIKFKAFLEFAAEDLGADYIATGHYVRRQDVDGKSRLLRGLDGNKDQSYFLYTLSHEQIAQSLFPVGELEKPEVRRIAEQLDLVTAKKKDSTGICFIGERKFRDFLGRYLPAQPGPIMTVDGQLVGKHQGLMYHTLGQRKGLGIGGTKEGGDDPWYVVDKDLDSNTLLVAQGHEHPRLMSVGLVAQQLHWVDRQPVTAPFRCVVKTRYRQQDIPCTVTPLDDERVDVRFDDPVAAVTPGQSAVFYQGEICLGGGIIEQRYPLTIPA.

ATP-binding positions include 12 to 19 (GMSGGVDS) and Met38. The interval 98–100 (NPD) is interaction with target base in tRNA. Cys103 acts as the Nucleophile in catalysis. A disulfide bridge connects residues Cys103 and Cys200. Gly128 contacts ATP. An interaction with tRNA region spans residues 150–152 (KDQ). The active-site Cysteine persulfide intermediate is Cys200. The segment at 312-313 (RY) is interaction with tRNA.

This sequence belongs to the MnmA/TRMU family. In terms of assembly, interacts with TusE.

It is found in the cytoplasm. It carries out the reaction S-sulfanyl-L-cysteinyl-[protein] + uridine(34) in tRNA + AH2 + ATP = 2-thiouridine(34) in tRNA + L-cysteinyl-[protein] + A + AMP + diphosphate + H(+). Its function is as follows. Catalyzes the 2-thiolation of uridine at the wobble position (U34) of tRNA(Lys), tRNA(Glu) and tRNA(Gln), leading to the formation of s(2)U34, the first step of tRNA-mnm(5)s(2)U34 synthesis. Sulfur is provided by IscS, via a sulfur-relay system. Binds ATP and its substrate tRNAs. This chain is tRNA-specific 2-thiouridylase MnmA, found in Yersinia pseudotuberculosis serotype O:1b (strain IP 31758).